A 1578-amino-acid chain; its full sequence is Formin-2 (1578 aa).

Basic and acidic residues-rich tracts occupy residues 1–17 (MGNQ…DASH), 26–35 (AGPRDAEITK), and 57–66 (TSKKKSKSDS). The disordered stretch occupies residues 1–73 (MGNQDGKLKR…SDSRASVFSN (73 aa)). Residue Ser-89 is modified to Phosphoserine. 3 disordered regions span residues 208 to 230 (KLLL…QPGA), 244 to 383 (EAEK…PSPR), and 401 to 458 (RQLS…GLSR). Composition is skewed to polar residues over residues 273–282 (SSGSHLTSET) and 290–300 (SAVTDSLSSPA). The span at 322-333 (DTDEECEEDAFE) shows a compositional bias: acidic residues. A compositionally biased stretch (basic and acidic residues) spans 351 to 364 (ASQRLEKEPEEGMR). Composition is skewed to low complexity over residues 404 to 418 (SSPN…NQSP) and 427 to 442 (SVSR…AAAP). Phosphoserine is present on residues Ser-459, Ser-489, and Ser-493. Residues 587–634 (SMDYSEGQFPRREPSMWPSSKLPEEEPSPKDVDTEPKSSILESPKKCS) are disordered. A compositionally biased stretch (basic and acidic residues) spans 608–622 (LPEEEPSPKDVDTEP). Residues 643–683 (DVKSEGQATVIQQLEQTIEDLRTKIAELEKQYPALDLEGPR) adopt a coiled-coil conformation. Disordered regions lie at residues 714–765 (RTLE…SGPQ), 786–836 (DAQQ…GNNC), and 880–944 (PALQ…MGIS). Positions 735–1124 (PPPKAPPEGL…GCGFLFPPLP (390 aa)) constitute an FH1 domain. Polar residues predominate over residues 786–795 (DAQQIQSASQ). Over residues 803–817 (LGSDSQGQPSQPSLH) the composition is skewed to low complexity. Residues 818–827 (TESETSHEHS) show a composition bias toward basic and acidic residues. A compositionally biased stretch (pro residues) spans 893–944 (LPAPPQPPPLPGLGVPPPPPAPPLPGMGIPPPPPLPGMGIPPPPPLPGMGIS). Tandem repeats lie at residues 919-929 (MGIPPPPPLPG), 930-940 (MGIPPPPPLPG), 941-951 (MGISPLPPLPG), 952-962 (MGIPPPPPLPG), 963-973 (VGIPPPPPLPG), 974-984 (VGIPPPPPLPG), 985-995 (VGIPPPPPLPG), 996-1006 (VGIPPPPPLPG), 1007-1017 (VGIPPPPPLPG), 1018-1028 (VGIPPPPPLPG), 1029-1039 (VGIPPPPPLPG), and 1040-1050 (VGIPPPPPLPG). The interval 919–1039 (MGIPPPPPLP…GIPPPPPLPG (121 aa)) is 12 X 11 AA tandem repeats of [MV]-G-I-P-P-P-P-P-L-P-G. Residues 1037–1097 (LPGVGIPPPP…PPPPLLPGSG (61 aa)) are compositionally biased toward pro residues. Residues 1037-1108 (LPGVGIPPPP…PHSSQVGSST (72 aa)) are disordered. The FH2 domain maps to 1139-1554 (RKQLIEPCRP…KEAEEVCRQK (416 aa)). The stretch at 1419-1455 (QELFQASQMKFEDFQKDLRKLKKDLKACEAEAGKVYQ) forms a coiled coil. The segment at 1571–1578 (KAKISMKT) is important for interaction with SPIRE1.

The protein belongs to the formin homology family. Cappuccino subfamily. As to quaternary structure, interacts with SPIRE1. Binds actin. Interacts with CDKN1A. As to expression, detected in brain and in oocytes (at protein level). Expressed almost exclusively in the developing and mature central nervous system. Detected in oocytes.

It is found in the cytoplasm. Its subcellular location is the cytoskeleton. It localises to the cytosol. The protein localises to the perinuclear region. The protein resides in the nucleus. It is found in the nucleolus. Its subcellular location is the cell membrane. It localises to the cell cortex. The protein localises to the cytoplasmic vesicle membrane. Its function is as follows. Actin-binding protein that is involved in actin cytoskeleton assembly and reorganization. Acts as an actin nucleation factor and promotes assembly of actin filaments together with SPIRE1 and SPIRE2. Involved in intracellular vesicle transport along actin fibers, providing a novel link between actin cytoskeleton dynamics and intracellular transport. Required for asymmetric spindle positioning, asymmetric oocyte division and polar body extrusion during female germ cell meiosis. Plays a role in responses to DNA damage, cellular stress and hypoxia by protecting CDKN1A against degradation, and thereby plays a role in stress-induced cell cycle arrest. Also acts in the nucleus: together with SPIRE1 and SPIRE2, promotes assembly of nuclear actin filaments in response to DNA damage in order to facilitate movement of chromatin and repair factors after DNA damage. Protects cells against apoptosis by protecting CDKN1A against degradation. The protein is Formin-2 (Fmn2) of Mus musculus (Mouse).